The chain runs to 247 residues: Phosphate import ATP-binding protein PstB (247 aa).

One can recognise an ABC transporter domain in the interval 2 to 242 (CRDVNVYYGE…PRHPLTEDYI (241 aa)). 32 to 39 (GPSGCGKS) is a binding site for ATP.

It belongs to the ABC transporter superfamily. Phosphate importer (TC 3.A.1.7) family. As to quaternary structure, the complex is composed of two ATP-binding proteins (PstB), two transmembrane proteins (PstC and PstA) and a solute-binding protein (PstS).

The protein resides in the cell inner membrane. It carries out the reaction phosphate(out) + ATP + H2O = ADP + 2 phosphate(in) + H(+). Part of the ABC transporter complex PstSACB involved in phosphate import. Responsible for energy coupling to the transport system. This chain is Phosphate import ATP-binding protein PstB, found in Methylococcus capsulatus (strain ATCC 33009 / NCIMB 11132 / Bath).